We begin with the raw amino-acid sequence, 767 residues long: Bifunctional lysine-specific demethylase and histidyl-hydroxylase NO66 (767 aa).

A disordered region spans residues 21–324; that stretch reads TVSQKQQREK…GRQEAHRQNS (304 aa). Residue Ser-44 is modified to Phosphoserine. Over residues 46–71 the composition is skewed to acidic residues; the sequence is SDDDDEDDGEGEDDNDSNSDEDESGS. The segment covering 72-81 has biased composition (low complexity); the sequence is ESDATSADDS. The span at 82-98 shows a compositional bias: acidic residues; the sequence is FSSDDNDDDDSGDEDGS. Composition is skewed to polar residues over residues 127-137 and 177-199; these read YTINSENSSVE and ESATNGRIQQRKSMVEPATTSKP. Position 214 is a phosphoserine (Ser-214). A compositionally biased stretch (polar residues) spans 262–279; it reads PSSSGASCPLPSKTSKQV. Residues 315 to 324 are compositionally biased toward basic and acidic residues; it reads GRQEAHRQNS. The JmjC domain maps to 420-565; sequence CSIRILNPST…NLLEKLMPMV (146 aa). Residues His-466, Asp-468, and His-531 each coordinate Fe cation.

Belongs to the ROX family. NO66 subfamily. The cofactor is Fe(2+).

Its subcellular location is the nucleus. The catalysed reaction is N(6),N(6)-dimethyl-L-lysyl(36)-[histone H3] + 2 2-oxoglutarate + 2 O2 = L-lysyl(36)-[histone H3] + 2 formaldehyde + 2 succinate + 2 CO2. Its function is as follows. Oxygenase that can act as both a histone lysine demethylase and a ribosomal histidine hydroxylase. Specifically demethylates 'Lys-4' (H3K4me) and 'Lys-36' (H3K36me) of histone H3, thereby playing a central role in histone code. The sequence is that of Bifunctional lysine-specific demethylase and histidyl-hydroxylase NO66 from Drosophila willistoni (Fruit fly).